Reading from the N-terminus, the 146-residue chain is Catabolic 3-dehydroquinase (146 aa).

Catalysis depends on tyrosine 24, which acts as the Proton acceptor. Residues asparagine 78, histidine 84, and aspartate 91 each contribute to the substrate site. The Proton donor role is filled by histidine 104. Substrate-binding positions include 105–106 (IT) and arginine 115.

Belongs to the type-II 3-dehydroquinase family. Homododecamer. Adopts a ring-like structure, composed of an arrangement of two hexameric rings stacked on top of one another.

It carries out the reaction 3-dehydroquinate = 3-dehydroshikimate + H2O. It participates in aromatic compound metabolism; 3,4-dihydroxybenzoate biosynthesis; 3,4-dihydroxybenzoate from 3-dehydroquinate: step 1/2. Its function is as follows. Is involved in the catabolism of quinate. Allows the utilization of quinate as carbon source via the beta-ketoadipate pathway. The polypeptide is Catabolic 3-dehydroquinase (Candida albicans (strain SC5314 / ATCC MYA-2876) (Yeast)).